We begin with the raw amino-acid sequence, 430 residues long: Adenylosuccinate synthetase (430 aa).

GTP is bound by residues 12 to 18 and 40 to 42; these read GDEGKGK and GHT. Asp-13 acts as the Proton acceptor in catalysis. The Mg(2+) site is built by Asp-13 and Gly-40. Residues 13 to 16, 38 to 41, Thr-130, Arg-144, Gln-224, Thr-239, and Arg-303 contribute to the IMP site; these read DEGK and NAGH. His-41 serves as the catalytic Proton donor. 299 to 305 serves as a coordination point for substrate; the sequence is TVTSRKR. GTP is bound by residues Arg-305, 331–333, and 413–415; these read KLD and STS.

Belongs to the adenylosuccinate synthetase family. In terms of assembly, homodimer. It depends on Mg(2+) as a cofactor.

It is found in the cytoplasm. It catalyses the reaction IMP + L-aspartate + GTP = N(6)-(1,2-dicarboxyethyl)-AMP + GDP + phosphate + 2 H(+). The protein operates within purine metabolism; AMP biosynthesis via de novo pathway; AMP from IMP: step 1/2. Plays an important role in the de novo pathway of purine nucleotide biosynthesis. Catalyzes the first committed step in the biosynthesis of AMP from IMP. This is Adenylosuccinate synthetase from Pelagibacter ubique (strain HTCC1062).